A 92-amino-acid polypeptide reads, in one-letter code: Phospholemman (92 aa).

Positions 1–20 (MAYLHHTLLVCMGLLAMANA) are cleaved as a signal peptide. Residues 22 to 35 (APQEQDPFTYDYQS) are Extracellular-facing. A helical transmembrane segment spans residues 36–56 (LRIGGLIIAGILFILGILIIL). The Cytoplasmic portion of the chain corresponds to 57-92 (KRGAWERFDTARRTGEPDEEEGTFRSSIRRLSTRRR). A disordered region spans residues 67 to 92 (ARRTGEPDEEEGTFRSSIRRLSTRRR). Phosphothreonine is present on Thr-79. Residue Ser-82 is modified to Phosphoserine. Residue Ser-83 is modified to Phosphoserine; by PKA and PKC. Residues 83-92 (SIRRLSTRRR) are compositionally biased toward basic residues. Ser-88 is modified (phosphoserine; by PKA). Thr-89 carries the phosphothreonine; by PKC modification.

It belongs to the FXYD family. In terms of assembly, homotetramer. Monomer. Regulatory subunit of the sodium/potassium-transporting ATPase (NKA) which is composed of a catalytic alpha subunit, a non-catalytic beta subunit and an additional regulatory subunit. The monomeric form associates with NKA while the oligomeric form does not. Interacts with the catalytic alpha-1 subunit ATP1A1. Also interacts with the catalytic alpha-2 and alpha-3 subunits ATP1A2 and ATP1A3. Very little interaction with ATP1A1, ATP1A2 or ATP1A3 when phosphorylated at Ser-83. Interacts with the non-catalytic beta-1 subunit ATP1B1. Oxidative stress decreases interaction with ATP1A1 but increases interaction with ATP1B1. Post-translationally, major plasma membrane substrate for cAMP-dependent protein kinase (PKA) and protein kinase C (PKC) in several different tissues. Phosphorylated in response to insulin and adrenergic stimulation. Phosphorylation at Ser-88 stimulates sodium/potassium-transporting ATPase activity while the unphosphorylated form inhibits sodium/potassium-transporting ATPase activity. Phosphorylation increases tetramerization, decreases binding to ATP1A1 and reduces inhibition of ATP1A1 activity. Phosphorylation at Ser-83 leads to greatly reduced interaction with ATP1A1, ATP1A2 and ATP1A3. May be phosphorylated by DMPK. In terms of processing, palmitoylation increases half-life and stability and is enhanced upon phosphorylation at Ser-88 by PKA. Glutathionylated. Expressed in ventricular myocytes (at protein level).

It is found in the cell membrane. It localises to the sarcolemma. The protein resides in the apical cell membrane. The protein localises to the membrane. Its subcellular location is the caveola. It is found in the T-tubule. Its function is as follows. Associates with and regulates the activity of the sodium/potassium-transporting ATPase (NKA) which transports Na(+) out of the cell and K(+) into the cell. Inhibits NKA activity in its unphosphorylated state and stimulates activity when phosphorylated. Reduces glutathionylation of the NKA beta-1 subunit ATP1B1, thus reversing glutathionylation-mediated inhibition of ATP1B1. Contributes to female sexual development by maintaining the excitability of neurons which secrete gonadotropin-releasing hormone. This Oryctolagus cuniculus (Rabbit) protein is Phospholemman.